The following is a 469-amino-acid chain: Neuraminidase (469 aa).

The Intravirion portion of the chain corresponds to 1 to 9 (MNPNQKIIT). The chain crosses the membrane as a helical span at residues 10 to 30 (IGSVSLTFAAICFLMQIAILV). Positions 11–33 (GSVSLTFAAICFLMQIAILVTTV) are involved in apical transport and lipid raft association. Residues 31-469 (TTVTLNFKQY…DGADINLMPI (439 aa)) lie on the Virion surface side of the membrane. The interval 36 to 88 (NFKQYECDPPATNQVMPCEPIIIERNITEIVYLTNTTIEREICPKLVEYRNWS) is hypervariable stalk region. Asn61, Asn70, and Asn86 each carry an N-linked (GlcNAc...) asparagine; by host glycan. The head of neuraminidase stretch occupies residues 91 to 469 (QCKITGFAPF…DGADINLMPI (379 aa)). 8 disulfides stabilise this stretch: Cys92–Cys417, Cys124–Cys129, Cys183–Cys230, Cys232–Cys237, Cys278–Cys291, Cys280–Cys289, Cys318–Cys337, and Cys421–Cys447. Substrate is bound at residue Arg118. Asn146 is a glycosylation site (N-linked (GlcNAc...) asparagine; by host). The Proton donor/acceptor role is filled by Asp151. Arg152 is a substrate binding site. Residues Asn200 and Asn234 are each glycosylated (N-linked (GlcNAc...) asparagine; by host). Substrate is bound at residue 276 to 277 (EE). Arg292 contributes to the substrate binding site. Residues Asp293 and Gly297 each coordinate Ca(2+). Asn313 carries an N-linked (GlcNAc...) asparagine; by host glycan. Asp324 serves as a coordination point for Ca(2+). Arg371 contributes to the substrate binding site. Asn402 is a glycosylation site (N-linked (GlcNAc...) asparagine; by host). The active-site Nucleophile is the Tyr406.

The protein belongs to the glycosyl hydrolase 34 family. As to quaternary structure, homotetramer. It depends on Ca(2+) as a cofactor. Post-translationally, N-glycosylated.

The protein resides in the virion membrane. The protein localises to the host apical cell membrane. It catalyses the reaction Hydrolysis of alpha-(2-&gt;3)-, alpha-(2-&gt;6)-, alpha-(2-&gt;8)- glycosidic linkages of terminal sialic acid residues in oligosaccharides, glycoproteins, glycolipids, colominic acid and synthetic substrates.. Inhibited by the neuraminidase inhibitors zanamivir (Relenza) and oseltamivir (Tamiflu). These drugs interfere with the release of progeny virus from infected cells and are effective against all influenza strains. Resistance to neuraminidase inhibitors is quite rare. Its function is as follows. Catalyzes the removal of terminal sialic acid residues from viral and cellular glycoconjugates. Cleaves off the terminal sialic acids on the glycosylated HA during virus budding to facilitate virus release. Additionally helps virus spread through the circulation by further removing sialic acids from the cell surface. These cleavages prevent self-aggregation and ensure the efficient spread of the progeny virus from cell to cell. Otherwise, infection would be limited to one round of replication. Described as a receptor-destroying enzyme because it cleaves a terminal sialic acid from the cellular receptors. May facilitate viral invasion of the upper airways by cleaving the sialic acid moieties on the mucin of the airway epithelial cells. Likely to plays a role in the budding process through its association with lipid rafts during intracellular transport. May additionally display a raft-association independent effect on budding. Plays a role in the determination of host range restriction on replication and virulence. Sialidase activity in late endosome/lysosome traffic seems to enhance virus replication. The polypeptide is Neuraminidase (Influenza A virus (strain A/Swine/Kanagawa/2/1978 H1N2)).